The chain runs to 414 residues: BICD family-like cargo adapter 2 (414 aa).

A coiled-coil region spans residues 34-341 (GQALLEKNEE…DALNQQLLNT (308 aa)). Positions 372–384 (QEKEKENNKERTG) are enriched in basic and acidic residues. Positions 372 to 399 (QEKEKENNKERTGFQRGTRTTKSLRLRG) are disordered.

The chain is BICD family-like cargo adapter 2 (bicdl2) from Danio rerio (Zebrafish).